The chain runs to 358 residues: Heme A synthase (358 aa).

The next 8 helical transmembrane spans lie at 22–42, 107–127, 133–153, 172–192, 208–228, 269–289, 302–322, and 324–344; these read IQVW…VGGA, VLGR…WATK, ILFP…IGWW, LAFH…LSRG, FAAW…LVAG, FIHR…AFYV, AFLI…TLLH, and VPIS…CFAV. H271 contacts heme. H332 contributes to the heme binding site.

It belongs to the COX15/CtaA family. Type 2 subfamily. Interacts with CtaB. It depends on heme b as a cofactor.

It localises to the cell membrane. It catalyses the reaction Fe(II)-heme o + 2 A + H2O = Fe(II)-heme a + 2 AH2. It participates in porphyrin-containing compound metabolism; heme A biosynthesis; heme A from heme O: step 1/1. Catalyzes the conversion of heme O to heme A by two successive hydroxylations of the methyl group at C8. The first hydroxylation forms heme I, the second hydroxylation results in an unstable dihydroxymethyl group, which spontaneously dehydrates, resulting in the formyl group of heme A. This chain is Heme A synthase, found in Bartonella tribocorum (strain CIP 105476 / IBS 506).